We begin with the raw amino-acid sequence, 235 residues long: uncharacterized protein (235 aa).

Disordered regions lie at residues 60 to 96 (SSNR…QKKT) and 192 to 235 (LNTS…YDSF). Polar residues predominate over residues 80-93 (SFQNMNSSMPSSTQ). Residues 197 to 214 (SEDDTESIVETDYSEEEK) are compositionally biased toward acidic residues.

This sequence belongs to the asfivirus DP238L family.

This is an uncharacterized protein from Ornithodoros (relapsing fever ticks).